Consider the following 179-residue polypeptide: tRNA (cytidine(56)-2'-O)-methyltransferase (179 aa).

Residues Leu82, 112-116 (GAEKV), and 130-137 (VGNQPHSE) contribute to the S-adenosyl-L-methionine site.

It belongs to the aTrm56 family. In terms of assembly, homodimer.

The protein localises to the cytoplasm. The catalysed reaction is cytidine(56) in tRNA + S-adenosyl-L-methionine = 2'-O-methylcytidine(56) in tRNA + S-adenosyl-L-homocysteine + H(+). In terms of biological role, specifically catalyzes the AdoMet-dependent 2'-O-ribose methylation of cytidine at position 56 in tRNAs. This is tRNA (cytidine(56)-2'-O)-methyltransferase from Methanococcus maripaludis (strain C7 / ATCC BAA-1331).